A 201-amino-acid chain; its full sequence is Putative lipoprotein LppC (201 aa).

A signal peptide spans methionine 1–glycine 23. A lipid anchor (N-palmitoyl cysteine) is attached at cysteine 24. The S-diacylglycerol cysteine moiety is linked to residue cysteine 24. Prevents bacterial uptake by a human macrophage-like cell line stretches follow at residues glycine 77–alanine 96, leucine 97–glycine 116, and isoleucine 117–valine 136. Residues glycine 122–glycine 141 form a disordered region.

Belongs to the UPF0098 family.

The protein resides in the cell membrane. The protein localises to the cell surface. Probably involved in bacterial recognition and uptake by its host (human). The polypeptide is Putative lipoprotein LppC (Mycobacterium tuberculosis (strain ATCC 25618 / H37Rv)).